The sequence spans 686 residues: Acyl-CoA synthetase short-chain family member 3, mitochondrial (686 aa).

A mitochondrion-targeting transit peptide spans 1-29 (MKPSWLQCHKVTSAGGLGGPLPGSSPARG). 227-230 (EPGR) contributes to the CoA binding site. ATP-binding positions include 425 to 427 (GER) and 446 to 451 (DHWWQT). Lys-518 bears the N6-succinyllysine mark. Position 524 is an N6-acetyllysine (Lys-524). Residues Asp-539, Arg-554, and Arg-565 each contribute to the ATP site. Arg-624 contributes to the CoA binding site.

Belongs to the ATP-dependent AMP-binding enzyme family.

The protein localises to the mitochondrion matrix. The enzyme catalyses acetate + ATP + CoA = acetyl-CoA + AMP + diphosphate. The catalysed reaction is propanoate + ATP + CoA = propanoyl-CoA + AMP + diphosphate. It catalyses the reaction butanoate + ATP + CoA = butanoyl-CoA + AMP + diphosphate. In terms of biological role, catalyzes the synthesis of acetyl-CoA from short-chain fatty acids. Propionate is the preferred substrate but can also utilize acetate and butyrate with a much lower affinity. This is Acyl-CoA synthetase short-chain family member 3, mitochondrial (ACSS3) from Pongo abelii (Sumatran orangutan).